A 294-amino-acid polypeptide reads, in one-letter code: MSIFKGSGVAIVTPFCENGVNFKKLEELIEWHIENSTDAIVICGTTGEASTMTEAEIKETIKFTVDKVQGRIPVIAGTGSNNTRKAIELSKWAKSIGVDGLLLITPYYNKTTQKGIVEHFKAINDDVDVPIILYNVPGRTGLNILPKTLVKICDTCSNVVAIKEASGDLSQIIEMKALLKDRIDIYSGNDDQIIPILSIGGIGVISVLANIMPKEVHDMCELYLKGKTKKALEIQLNTLSLTNSLFIETNPIPVKTAMNIMGIDVGELRLPLCNMDESNLNLLKKELSNHALIK.

Thr46 provides a ligand contact to pyruvate. The Proton donor/acceptor role is filled by Tyr134. Lys163 serves as the catalytic Schiff-base intermediate with substrate. Ile205 lines the pyruvate pocket.

This sequence belongs to the DapA family. As to quaternary structure, homotetramer; dimer of dimers.

It is found in the cytoplasm. The catalysed reaction is L-aspartate 4-semialdehyde + pyruvate = (2S,4S)-4-hydroxy-2,3,4,5-tetrahydrodipicolinate + H2O + H(+). It functions in the pathway amino-acid biosynthesis; L-lysine biosynthesis via DAP pathway; (S)-tetrahydrodipicolinate from L-aspartate: step 3/4. Catalyzes the condensation of (S)-aspartate-beta-semialdehyde [(S)-ASA] and pyruvate to 4-hydroxy-tetrahydrodipicolinate (HTPA). This Clostridium tetani (strain Massachusetts / E88) protein is 4-hydroxy-tetrahydrodipicolinate synthase.